Reading from the N-terminus, the 341-residue chain is MTSDKTLNNLIAYLDNPHPTVEQAIEVFTPLTVGDYDDVHIAALLATIRTRGETYADIAGAAKAFLAAGRPFPITGAGLMDSAGTGGDGANTINVTTAASLVAAAGGVKMVKCGNRSVSSKSGSADVLEALNIPLDLNPDRAVRQFNASNFTFLFAPAYNPAVAHVQPVRKALKVPTLFNTLGPILAPARPEFQVMGVANPKLGQIIAEVFRELGRSHALVVHGSGTDEIAVHGPTTVWELRDGEISTYTITPEEIGINRYELSELAGGDGVENAHLMRETFASRGPAAHRDAISATAGAMFYTANHVPTIAEGVAKAQTMLADGSVERWLAIHEEANYAE.

5-phospho-alpha-D-ribose 1-diphosphate-binding positions include G84, 87-88 (GD), T92, 94-97 (NVTT), 112-120 (KCGNRSVSS), and S124. G84 provides a ligand contact to anthranilate. T96 is a Mg(2+) binding site. Residue N115 coordinates anthranilate. R170 contacts anthranilate. Residues D228 and E229 each contribute to the Mg(2+) site.

This sequence belongs to the anthranilate phosphoribosyltransferase family. Homodimer. Mg(2+) is required as a cofactor.

The catalysed reaction is N-(5-phospho-beta-D-ribosyl)anthranilate + diphosphate = 5-phospho-alpha-D-ribose 1-diphosphate + anthranilate. It participates in amino-acid biosynthesis; L-tryptophan biosynthesis; L-tryptophan from chorismate: step 2/5. Its function is as follows. Catalyzes the transfer of the phosphoribosyl group of 5-phosphorylribose-1-pyrophosphate (PRPP) to anthranilate to yield N-(5'-phosphoribosyl)-anthranilate (PRA). This Corynebacterium diphtheriae (strain ATCC 700971 / NCTC 13129 / Biotype gravis) protein is Anthranilate phosphoribosyltransferase.